The primary structure comprises 209 residues: Ribosomal RNA large subunit methyltransferase E (209 aa).

Gly-63, Trp-65, Asp-83, Asp-99, and Asp-124 together coordinate S-adenosyl-L-methionine. The active-site Proton acceptor is Lys-164.

Belongs to the class I-like SAM-binding methyltransferase superfamily. RNA methyltransferase RlmE family.

It localises to the cytoplasm. It carries out the reaction uridine(2552) in 23S rRNA + S-adenosyl-L-methionine = 2'-O-methyluridine(2552) in 23S rRNA + S-adenosyl-L-homocysteine + H(+). Its function is as follows. Specifically methylates the uridine in position 2552 of 23S rRNA at the 2'-O position of the ribose in the fully assembled 50S ribosomal subunit. This Baumannia cicadellinicola subsp. Homalodisca coagulata protein is Ribosomal RNA large subunit methyltransferase E.